A 239-amino-acid chain; its full sequence is Zinc finger protein 575 (239 aa).

The segment at 1–62 (MLGGSVKSEV…PQRPHRCPDC (62 aa)) is disordered. Positions 22–31 (PETKAPHQDL) are enriched in basic and acidic residues. A compositionally biased stretch (basic residues) spans 46-57 (RPRRRPPPQRPH). 6 consecutive C2H2-type zinc fingers follow at residues 57–79 (HRCP…RLAH), 85–107 (HPCP…RLTH), 113–135 (HSCP…LWTH), 141–163 (YPCP…RHTH), 171–193 (YPCP…RLCH), and 207–230 (HRCS…RSHH).

This sequence belongs to the krueppel C2H2-type zinc-finger protein family.

Its subcellular location is the nucleus. In terms of biological role, may be involved in transcriptional regulation. This chain is Zinc finger protein 575 (Znf575), found in Mus musculus (Mouse).